We begin with the raw amino-acid sequence, 268 residues long: FKBP-type peptidyl-prolyl cis-trans isomerase FkpA (268 aa).

A signal peptide spans 1 to 20 (MNNFLKVSLLAAAVAVSLTA). Residues 172–257 (TDIVKVHYTG…VFDVELLAIE (86 aa)) form the PPIase FKBP-type domain.

Belongs to the FKBP-type PPIase family.

Its subcellular location is the periplasm. The catalysed reaction is [protein]-peptidylproline (omega=180) = [protein]-peptidylproline (omega=0). Its function is as follows. PPIases accelerate the folding of proteins. It catalyzes the cis-trans isomerization of proline imidic peptide bonds in oligopeptides. FkpA probably acts in the folding of extracytoplasmic proteins. This is FKBP-type peptidyl-prolyl cis-trans isomerase FkpA (fkpA) from Aeromonas hydrophila.